A 512-amino-acid polypeptide reads, in one-letter code: Maturase K (512 aa).

This sequence belongs to the intron maturase 2 family. MatK subfamily.

It localises to the plastid. It is found in the chloroplast. Its function is as follows. Usually encoded in the trnK tRNA gene intron. Probably assists in splicing its own and other chloroplast group II introns. This Oenothera argillicola (Appalachian evening primrose) protein is Maturase K.